The chain runs to 329 residues: tRNA-modifying protein YgfZ (329 aa).

Folate-binding residues include Trp32 and Trp190.

It belongs to the tRNA-modifying YgfZ family.

It localises to the cytoplasm. Folate-binding protein involved in regulating the level of ATP-DnaA and in the modification of some tRNAs. It is probably a key factor in regulatory networks that act via tRNA modification, such as initiation of chromosomal replication. The protein is tRNA-modifying protein YgfZ of Photobacterium profundum (strain SS9).